Reading from the N-terminus, the 124-residue chain is Keratin-associated protein 12-2 (124 aa).

A run of 20 repeats spans residues 10-13, 14-18, 19-23, 24-28, 33-38, 39-43, 44-48, 49-52, 53-57, 58-62, 63-67, 68-72, 73-77, 78-82, 83-87, 88-92, 98-102, 103-107, 108-112, and 113-117. The tract at residues 10–117 is 20 X 5 AA approximate repeats; the sequence is CQAACVPSSC…CPTLVYRPIS (108 aa).

Belongs to the KRTAP type 12 family. Interacts with hair keratins.

In terms of biological role, in the hair cortex, hair keratin intermediate filaments are embedded in an interfilamentous matrix, consisting of hair keratin-associated proteins (KRTAP), which are essential for the formation of a rigid and resistant hair shaft through their extensive disulfide bond cross-linking with abundant cysteine residues of hair keratins. The matrix proteins include the high-sulfur and high-glycine-tyrosine keratins. This is Keratin-associated protein 12-2 from Bos taurus (Bovine).